The following is a 632-amino-acid chain: 1-deoxy-D-xylulose-5-phosphate synthase (632 aa).

Residues His73 and 114 to 116 (SHA) contribute to the thiamine diphosphate site. Residue Asp146 participates in Mg(2+) binding. Thiamine diphosphate-binding positions include 147 to 148 (GA), Asn176, Tyr287, and Glu368. Mg(2+) is bound at residue Asn176.

The protein belongs to the transketolase family. DXPS subfamily. In terms of assembly, homodimer. Mg(2+) is required as a cofactor. Thiamine diphosphate serves as cofactor.

The catalysed reaction is D-glyceraldehyde 3-phosphate + pyruvate + H(+) = 1-deoxy-D-xylulose 5-phosphate + CO2. The protein operates within metabolic intermediate biosynthesis; 1-deoxy-D-xylulose 5-phosphate biosynthesis; 1-deoxy-D-xylulose 5-phosphate from D-glyceraldehyde 3-phosphate and pyruvate: step 1/1. In terms of biological role, catalyzes the acyloin condensation reaction between C atoms 2 and 3 of pyruvate and glyceraldehyde 3-phosphate to yield 1-deoxy-D-xylulose-5-phosphate (DXP). The chain is 1-deoxy-D-xylulose-5-phosphate synthase from Corynebacterium glutamicum (strain R).